Consider the following 190-residue polypeptide: Peptidyl-prolyl cis-trans isomerase A (190 aa).

A signal peptide spans 1 to 24; the sequence is MLKSTLAAVAAVFALSALSPAALA. The region spanning 27 to 188 is the PPIase cyclophilin-type domain; it reads GDPHVLLTTS…KPVVILSAKV (162 aa).

This sequence belongs to the cyclophilin-type PPIase family.

The protein localises to the periplasm. The catalysed reaction is [protein]-peptidylproline (omega=180) = [protein]-peptidylproline (omega=0). PPIases accelerate the folding of proteins. It catalyzes the cis-trans isomerization of proline imidic peptide bonds in oligopeptides. The protein is Peptidyl-prolyl cis-trans isomerase A (ppiA) of Salmonella typhimurium (strain LT2 / SGSC1412 / ATCC 700720).